The sequence spans 194 residues: Peptidyl-tRNA hydrolase (194 aa).

Tyr17 contacts tRNA. His22 acts as the Proton acceptor in catalysis. TRNA is bound by residues Tyr68, Asn70, and Asn116.

This sequence belongs to the PTH family. In terms of assembly, monomer.

Its subcellular location is the cytoplasm. The catalysed reaction is an N-acyl-L-alpha-aminoacyl-tRNA + H2O = an N-acyl-L-amino acid + a tRNA + H(+). Functionally, hydrolyzes ribosome-free peptidyl-tRNAs (with 1 or more amino acids incorporated), which drop off the ribosome during protein synthesis, or as a result of ribosome stalling. In terms of biological role, catalyzes the release of premature peptidyl moieties from peptidyl-tRNA molecules trapped in stalled 50S ribosomal subunits, and thus maintains levels of free tRNAs and 50S ribosomes. This chain is Peptidyl-tRNA hydrolase, found in Pseudomonas putida (strain GB-1).